Consider the following 2033-residue polypeptide: Envoplakin (2033 aa).

The segment covering 1–27 has biased composition (low complexity); the sequence is MFKGLSKGSQGKGSPKGSPAKGSPKGS. Disordered stretches follow at residues 1–37 and 65–85; these read MFKGLSKGSQGKGSPKGSPAKGSPKGSPSRHSRAATQ and QQDRLNSEQSQALQHQQETGR. Positions 1–841 are globular 1; sequence MFKGLSKGSQ…LEPTLAVSAP (841 aa). Positions 12-28 are 4 X 4 AA tandem repeats of K-G-S-P; that stretch reads KGSPKGSPAKGSPKGSP. The span at 71 to 84 shows a compositional bias: polar residues; the sequence is SEQSQALQHQQETG. The Spectrin repeat unit spans residues 229–330; that stretch reads YTHLQGCTRQ…LCICQETQLQ (102 aa). Residues 388–401 are compositionally biased toward basic and acidic residues; sequence TERATGDLQRRSRD. Disordered regions lie at residues 388–418 and 891–916; these read TERATGDLQRRSRDVAPLPQRRNPPQQPLHV and SEDIRRTHDAKQGSESPAQAGRESEA. The 58-residue stretch at 413–470 folds into the SH3 domain; that stretch reads QQPLHVDSICDWDSGEVQLLQGERYKLVDNTDPHAWVVQGPGGETKRAPAACFCIPAP. The central fibrous rod domain stretch occupies residues 842–1673; sequence KRPRVAPLQE…AKVSREELSQ (832 aa). Residues 845 to 1135 are a coiled coil; sequence RVAPLQESIQ…AISSVEPKVI (291 aa). Positions 891 to 902 are enriched in basic and acidic residues; that stretch reads SEDIRRTHDAKQ. The Plectin 1 repeat unit spans residues 1185–1226; the sequence is KQRPKVQLQERVHEIFQVDPETEQEITRLKAKLQEMAGKRSG. Residue Ser1575 is modified to Phosphoserine. Positions 1614–1623 are enriched in low complexity; that stretch reads QEESKLLSQK. The disordered stretch occupies residues 1614-1636; the sequence is QEESKLLSQKTESERQKAAQRGQ. The globular 2 stretch occupies residues 1674-2033; sequence ETQTRETNLS…ASPTVPRSLR (360 aa). The Plectin 2 repeat unit spans residues 1678–1713; sequence RETNLSTKISILEPETGKDMSPYEAYKRGIIDRGQY. Ser1799 is subject to Phosphoserine. Plectin repeat units lie at residues 1818-1855, 1856-1893, 1894-1931, 1932-1969, and 1970-2007; these read LGLGDDSFPIAGIYDTTTDNKCSIKTAVAKNMLDPITG, QKLLEAQAATGGIVDLLSRERYSVHKAMERGLIENTST, QRLLNAQKAFTGIEDPVTKKRLSVGEAVQKGWMPRESV, LPHLQVQHLTGGLIDPKRTGRIPIQQALLSGMISEELA, and QLLQDESSYEKDLTDPISKERLSYKEAMGRCRKDPLSG. Phosphoserine is present on Ser2025.

This sequence belongs to the plakin or cytolinker family. In terms of assembly, may form a homodimer or a heterodimer with PPL. Exclusively expressed in stratified squamous epithelia.

Its subcellular location is the cell junction. The protein resides in the desmosome. It is found in the cornified envelope. The protein localises to the cytoplasm. It localises to the cytoskeleton. Functionally, component of the cornified envelope of keratinocytes. May link the cornified envelope to desmosomes and intermediate filaments. This Homo sapiens (Human) protein is Envoplakin (EVPL).